The primary structure comprises 585 residues: MTQSTEQSTLDTYKRLWPYISFYKAGLSVAVVALIINALGDTLMLSMIKPLLDESFGGLDNIESDFLSMMPYYLVGLMILRGASGFVSTYCLSWVSGKVVMNLRRGLFNHFMKMPVSFFDKESSGALLSRITYDSEQVASATSSALVSMVREGASIIGLMALMFWNSWQLSAILLVIAPVVAFSIRLVSKRFRKISKNMQDAMGSVTSSAEQMLKGHKVVLSYGGQEVEKQRFDSVSNNMRQQTMKLVSAQAIANPVIQVIASFALVVVLVLANSEALRAELTPGTFAVVFGAMFGLMRPLKALTNVTSQFQRGMAACQTLFELMDLEAEEDNGKHKIARVNGDIQVKNVTFTYPTKDTPALRNVSFDLPAGKTLALVGRSGSGKSTIANLLTRFYDIDSGELILDGREVKDYQLSNLRDQVAVVSQNVHLFNDTIANNIAYASGDSFSRADIEKAAELAYAMDFIKGMPKGLDTMIGENGVSLSGGQRQRLAIARALLRNAPVLILDEATSALDTESERAIQSALEELQKDRTVLVIAHRLSTIEGADQILVVDDGEIIERGTHGELIKHDGAYAQLHRIQFGD.

5 consecutive transmembrane segments (helical) span residues 16 to 36 (LWPY…ALII), 66 to 86 (FLSM…ASGF), 156 to 176 (IIGL…ILLV), 252 to 272 (AIAN…VLVL), and 278 to 298 (LRAE…FGLM). Residues 29–313 (VAVVALIINA…LTNVTSQFQR (285 aa)) form the ABC transmembrane type-1 domain. The region spanning 345–581 (IQVKNVTFTY…DGAYAQLHRI (237 aa)) is the ABC transporter domain. 379 to 386 (GRSGSGKS) is an ATP binding site.

It belongs to the ABC transporter superfamily. Lipid exporter (TC 3.A.1.106) family. As to quaternary structure, homodimer.

The protein localises to the cell inner membrane. The catalysed reaction is ATP + H2O + lipid A-core oligosaccharideSide 1 = ADP + phosphate + lipid A-core oligosaccharideSide 2.. In terms of biological role, involved in lipopolysaccharide (LPS) biosynthesis. Translocates lipid A-core from the inner to the outer leaflet of the inner membrane. Transmembrane domains (TMD) form a pore in the inner membrane and the ATP-binding domain (NBD) is responsible for energy generation. The chain is ATP-dependent lipid A-core flippase from Photobacterium profundum (strain SS9).